The sequence spans 1023 residues: FHIP family protein AGAP011705 (1023 aa).

Composition is skewed to polar residues over residues Met-1–Phe-13, Ser-806–Tyr-825, and Gly-868–Asn-888. Disordered stretches follow at residues Met-1 to Gly-39 and Gly-797 to Gln-927. A compositionally biased stretch (low complexity) spans Val-889–Val-906.

It belongs to the FHIP family.

This is FHIP family protein AGAP011705 from Anopheles gambiae (African malaria mosquito).